Reading from the N-terminus, the 317-residue chain is Transcription factor MYB35 (317 aa).

2 HTH myb-type domains span residues 9-65 (KSNV…RPDL) and 66-116 (KHDS…KKKL). 2 DNA-binding regions (H-T-H motif) span residues 37–61 (WSLIPKKAGLNRCGKSCRLRWTNYL) and 89–112 (WSSIARKLPGRTDNDVKNHWNTKL).

Inflorescences-specific. Accumulates in anthers, especially in tapetum and meiocytes/microsporocytes and microspores during anther development.

Its subcellular location is the nucleus. Its function is as follows. Required for anther development and early tapetal function during microspore maturation. Regulates callose dissolution required for microspores release from the tetrads. The sequence is that of Transcription factor MYB35 from Arabidopsis thaliana (Mouse-ear cress).